The sequence spans 274 residues: D-aminoacyl-tRNA deacylase (274 aa).

This sequence belongs to the DtdA deacylase family. In terms of assembly, monomer. It depends on Zn(2+) as a cofactor.

The catalysed reaction is a D-aminoacyl-tRNA + H2O = a tRNA + a D-alpha-amino acid + H(+). It catalyses the reaction glycyl-tRNA(Ala) + H2O = tRNA(Ala) + glycine + H(+). In terms of biological role, D-aminoacyl-tRNA deacylase with broad substrate specificity. By recycling D-aminoacyl-tRNA to D-amino acids and free tRNA molecules, this enzyme counteracts the toxicity associated with the formation of D-aminoacyl-tRNA entities in vivo. The chain is D-aminoacyl-tRNA deacylase from Pyrococcus horikoshii (strain ATCC 700860 / DSM 12428 / JCM 9974 / NBRC 100139 / OT-3).